The sequence spans 296 residues: 4-diphosphocytidyl-2-C-methyl-D-erythritol kinase (296 aa).

Lys13 is a catalytic residue. 104–114 (PMGGGIGGGSS) contributes to the ATP binding site. The active site involves Asp146.

It belongs to the GHMP kinase family. IspE subfamily.

It carries out the reaction 4-CDP-2-C-methyl-D-erythritol + ATP = 4-CDP-2-C-methyl-D-erythritol 2-phosphate + ADP + H(+). The protein operates within isoprenoid biosynthesis; isopentenyl diphosphate biosynthesis via DXP pathway; isopentenyl diphosphate from 1-deoxy-D-xylulose 5-phosphate: step 3/6. In terms of biological role, catalyzes the phosphorylation of the position 2 hydroxy group of 4-diphosphocytidyl-2C-methyl-D-erythritol. The polypeptide is 4-diphosphocytidyl-2-C-methyl-D-erythritol kinase (Hahella chejuensis (strain KCTC 2396)).